The chain runs to 137 residues: Nucleoside diphosphate kinase (137 aa).

K9, F57, R85, T91, R102, and N112 together coordinate ATP. H115 serves as the catalytic Pros-phosphohistidine intermediate.

This sequence belongs to the NDK family. Homotetramer. Mg(2+) is required as a cofactor.

Its subcellular location is the cytoplasm. The catalysed reaction is a 2'-deoxyribonucleoside 5'-diphosphate + ATP = a 2'-deoxyribonucleoside 5'-triphosphate + ADP. It catalyses the reaction a ribonucleoside 5'-diphosphate + ATP = a ribonucleoside 5'-triphosphate + ADP. Functionally, major role in the synthesis of nucleoside triphosphates other than ATP. The ATP gamma phosphate is transferred to the NDP beta phosphate via a ping-pong mechanism, using a phosphorylated active-site intermediate. In Pelobacter propionicus (strain DSM 2379 / NBRC 103807 / OttBd1), this protein is Nucleoside diphosphate kinase.